The sequence spans 414 residues: Serine--tRNA ligase (414 aa).

230–232 serves as a coordination point for L-serine; it reads TAE. 261 to 263 provides a ligand contact to ATP; the sequence is RKE. Glu-284 is a binding site for L-serine. 348–351 provides a ligand contact to ATP; sequence EISS. L-serine is bound at residue Ser-382.

This sequence belongs to the class-II aminoacyl-tRNA synthetase family. Type-1 seryl-tRNA synthetase subfamily. In terms of assembly, homodimer. The tRNA molecule binds across the dimer.

The protein resides in the cytoplasm. It carries out the reaction tRNA(Ser) + L-serine + ATP = L-seryl-tRNA(Ser) + AMP + diphosphate + H(+). The enzyme catalyses tRNA(Sec) + L-serine + ATP = L-seryl-tRNA(Sec) + AMP + diphosphate + H(+). The protein operates within aminoacyl-tRNA biosynthesis; selenocysteinyl-tRNA(Sec) biosynthesis; L-seryl-tRNA(Sec) from L-serine and tRNA(Sec): step 1/1. In terms of biological role, catalyzes the attachment of serine to tRNA(Ser). Is also able to aminoacylate tRNA(Sec) with serine, to form the misacylated tRNA L-seryl-tRNA(Sec), which will be further converted into selenocysteinyl-tRNA(Sec). This Sulfurovum sp. (strain NBC37-1) protein is Serine--tRNA ligase.